Consider the following 509-residue polypeptide: uncharacterized protein (509 aa).

13 helical membrane passes run Ser14–Pro34, Thr117–Ile137, Glu158–Ile178, Ile188–Phe208, Leu209–Ser229, Ile240–Trp260, Leu303–Gly323, Trp324–Ser344, Ala359–Leu379, Met399–Val419, Ser423–Pro443, Met458–Phe478, and Phe484–Val504.

This sequence to E.coli YfcC. It to B.subtilis YcgA.

The protein localises to the cell membrane. This is an uncharacterized protein from Haemophilus influenzae (strain ATCC 51907 / DSM 11121 / KW20 / Rd).